A 141-amino-acid chain; its full sequence is Ly6/PLAUR domain-containing protein 1 (141 aa).

An N-terminal signal peptide occupies residues 1-20 (MWVLGIAATFCGLFLLPGFA). 6 cysteine pairs are disulfide-bonded: Cys25-Cys54, Cys28-Cys37, Cys46-Cys71, Cys77-Cys100, Cys88-Cys97, and Cys101-Cys106. One can recognise a UPAR/Ly6 domain in the interval 25–107 (CYQCEEFQLN…ISCCNTPLCN (83 aa)). Asn45 is a glycosylation site (N-linked (GlcNAc...) asparagine). The GPI-anchor amidated serine moiety is linked to residue Ser117. The propeptide at 118 to 141 (ASALRPGLRTTILFLKLALFSAHC) is removed in mature form.

As to quaternary structure, interacts with CHRNA4 and nAChRs containing alpha-4:beta-2 (CHRNA4:CHRNB2) and alpha-7 (CHRNA7) subunits.

It is found in the cell membrane. Its function is as follows. Believed to act as a modulator of nicotinic acetylcholine receptors (nAChRs) activity. In vitro increases receptor desensitization and decreases affinity for ACh of alpha-4:beta-2-containing nAChRs. May play a role in the intracellular trafficking of alpha-4:beta-2 and alpha-7-containing nAChRs and may inhibit their expression at the cell surface. May be involved in the control of anxiety. This chain is Ly6/PLAUR domain-containing protein 1 (LYPD1), found in Homo sapiens (Human).